The chain runs to 520 residues: 4-hydroxyphenylacetate 3-monooxygenase oxygenase component (520 aa).

FAD contacts are provided by residues 155–157 (HAI) and threonine 196.

Belongs to the FADH(2)-utilizing monooxygenase family. In terms of assembly, homodimer. HPA 3-hydroxylase consists of a reductase component HpaC and an oxygenase component HpaB. Some form of interactions between the reductase and the oxygenase facilitate the transfer of FADH(-) to the oxygenase in P.aeruginosa, although interactions are not required in other species.

The enzyme catalyses 4-hydroxyphenylacetate + FADH2 + O2 = 3,4-dihydroxyphenylacetate + FAD + H2O + H(+). It participates in aromatic compound metabolism; 4-hydroxyphenylacetate degradation; pyruvate and succinate semialdehyde from 4-hydroxyphenylacetate: step 1/7. Functionally, oxygenase component of the 4-hydroxyphenylacetate (HPA) 3-hydroxylase. Catalyzes the hydroxylation of 4-hydroxyphenylacetate to form 3,4-dihydroxyphenylacetate, using FADH(-) provided by the reductase component HpaC to activate oxygen. To a lesser extent, can also use reduced FMN. In vitro, has hydroxylation activity toward tyrosol and various cinnamic acid derivatives, catalyzing the hydroxylation of p-coumaric acid, caffeic acid, ferulic acid, and coniferaldehyde. The protein is 4-hydroxyphenylacetate 3-monooxygenase oxygenase component of Pseudomonas aeruginosa (strain ATCC 15692 / DSM 22644 / CIP 104116 / JCM 14847 / LMG 12228 / 1C / PRS 101 / PAO1).